Here is a 408-residue protein sequence, read N- to C-terminus: Protein CNPPD1 (408 aa).

The chain crosses the membrane as a helical span at residues 233–253 (CLLAVAYVSSVALAVASMAVI).

The protein belongs to the CNPPD1 family.

It localises to the membrane. This Rattus norvegicus (Rat) protein is Protein CNPPD1 (Cnppd1).